The following is a 185-amino-acid chain: Probable chorismate pyruvate-lyase (185 aa).

Substrate is bound by residues arginine 75, leucine 113, and glutamate 170.

It belongs to the UbiC family.

The protein resides in the cytoplasm. The catalysed reaction is chorismate = 4-hydroxybenzoate + pyruvate. Its pathway is cofactor biosynthesis; ubiquinone biosynthesis. Its function is as follows. Removes the pyruvyl group from chorismate, with concomitant aromatization of the ring, to provide 4-hydroxybenzoate (4HB) for the ubiquinone pathway. The polypeptide is Probable chorismate pyruvate-lyase (Coxiella burnetii (strain RSA 493 / Nine Mile phase I)).